The sequence spans 122 residues: NADPH-dependent 7-cyano-7-deazaguanine reductase (122 aa).

C34 acts as the Thioimide intermediate in catalysis. D41 serves as the catalytic Proton donor. Substrate contacts are provided by residues V56–L58 and H75–E76.

The protein belongs to the GTP cyclohydrolase I family. QueF type 1 subfamily.

It localises to the cytoplasm. It catalyses the reaction 7-aminomethyl-7-carbaguanine + 2 NADP(+) = 7-cyano-7-deazaguanine + 2 NADPH + 3 H(+). Its pathway is tRNA modification; tRNA-queuosine biosynthesis. Catalyzes the NADPH-dependent reduction of 7-cyano-7-deazaguanine (preQ0) to 7-aminomethyl-7-deazaguanine (preQ1). This chain is NADPH-dependent 7-cyano-7-deazaguanine reductase, found in Anaeromyxobacter dehalogenans (strain 2CP-1 / ATCC BAA-258).